Reading from the N-terminus, the 342-residue chain is Uroporphyrinogen decarboxylase (342 aa).

Substrate-binding positions include 26–30, Asp-76, Tyr-150, Ser-205, and His-321; that span reads RQAGR.

The protein belongs to the uroporphyrinogen decarboxylase family. In terms of assembly, homodimer.

It is found in the cytoplasm. It carries out the reaction uroporphyrinogen III + 4 H(+) = coproporphyrinogen III + 4 CO2. Its pathway is porphyrin-containing compound metabolism; protoporphyrin-IX biosynthesis; coproporphyrinogen-III from 5-aminolevulinate: step 4/4. Catalyzes the decarboxylation of four acetate groups of uroporphyrinogen-III to yield coproporphyrinogen-III. In Sphingopyxis alaskensis (strain DSM 13593 / LMG 18877 / RB2256) (Sphingomonas alaskensis), this protein is Uroporphyrinogen decarboxylase.